A 253-amino-acid chain; its full sequence is Uridine phosphorylase (253 aa).

The protein belongs to the PNP/UDP phosphorylase family. Homohexamer.

It is found in the cytoplasm. It catalyses the reaction uridine + phosphate = alpha-D-ribose 1-phosphate + uracil. It participates in pyrimidine metabolism; UMP biosynthesis via salvage pathway; uracil from uridine (phosphorylase route): step 1/1. In terms of biological role, catalyzes the reversible phosphorylytic cleavage of uridine to uracil and ribose-1-phosphate. Shows weak activity towards deoxyuridine and thymidine. The produced molecules are then utilized as carbon and energy sources or in the rescue of pyrimidine bases for nucleotide synthesis. In Escherichia coli (strain K12), this protein is Uridine phosphorylase.